We begin with the raw amino-acid sequence, 911 residues long: Valine--tRNA ligase (911 aa).

Residues 57–67 carry the 'HIGH' region motif; it reads PTVSGSLHVGH. Residues 599-603 carry the 'KMSKS' region motif; sequence KMSKS. Lysine 602 provides a ligand contact to ATP. The tract at residues 882 to 911 is disordered; the sequence is EESAAEDAPETEVAVEASELGEPPAKKPKH.

The protein belongs to the class-I aminoacyl-tRNA synthetase family. ValS type 2 subfamily. In terms of assembly, monomer.

It is found in the cytoplasm. It catalyses the reaction tRNA(Val) + L-valine + ATP = L-valyl-tRNA(Val) + AMP + diphosphate. Functionally, catalyzes the attachment of valine to tRNA(Val). As ValRS can inadvertently accommodate and process structurally similar amino acids such as threonine, to avoid such errors, it has a 'posttransfer' editing activity that hydrolyzes mischarged Thr-tRNA(Val) in a tRNA-dependent manner. In Bifidobacterium longum (strain DJO10A), this protein is Valine--tRNA ligase.